A 255-amino-acid chain; its full sequence is DNA repair protein RecO (255 aa).

It belongs to the RecO family.

In terms of biological role, involved in DNA repair and RecF pathway recombination. The protein is DNA repair protein RecO of Acidithiobacillus ferrooxidans (strain ATCC 23270 / DSM 14882 / CIP 104768 / NCIMB 8455) (Ferrobacillus ferrooxidans (strain ATCC 23270)).